The chain runs to 574 residues: Acetolactate synthase large subunit (574 aa).

E51 is a thiamine diphosphate binding site. FAD-binding positions include R153, H261–R282, and D304–N323. The interval Q397–S477 is thiamine pyrophosphate binding. Residues D448 and N475 each contribute to the Mg(2+) site.

This sequence belongs to the TPP enzyme family. In terms of assembly, dimer of large and small chains. Mg(2+) is required as a cofactor. Requires thiamine diphosphate as cofactor.

It catalyses the reaction 2 pyruvate + H(+) = (2S)-2-acetolactate + CO2. The protein operates within amino-acid biosynthesis; L-isoleucine biosynthesis; L-isoleucine from 2-oxobutanoate: step 1/4. It participates in amino-acid biosynthesis; L-valine biosynthesis; L-valine from pyruvate: step 1/4. This is Acetolactate synthase large subunit (ilvI) from Buchnera aphidicola subsp. Schlechtendalia chinensis.